The chain runs to 60 residues: Prokaryotic ubiquitin-like protein UBact (60 aa).

The tract at residues 1 to 60 is disordered; sequence MPERKTQPTTDQPWTKPNDGGDESGPRSPEVERPNTRDLLERMKRVDPRQARRYRQRSGE. The segment covering 29 to 50 has biased composition (basic and acidic residues); the sequence is PEVERPNTRDLLERMKRVDPRQ. Residues 51-60 show a composition bias toward basic residues; that stretch reads ARRYRQRSGE. An Isoglutamyl lysine isopeptide (Glu-Lys) (interchain with K-? in acceptor proteins) cross-link involves residue glutamate 60.

This sequence belongs to the ubiquitin-like protein UBact family.

In terms of biological role, may function as a protein modifier covalently attached to lysine residues of substrate proteins. This may serve to target the modified proteins for degradation by proteasomes. In Fraserbacteria sp. (strain RBG_16_55_9), this protein is Prokaryotic ubiquitin-like protein UBact.